The primary structure comprises 158 residues: MERQIINRKKRVFSLEPNKNPSAVFTRKYTSHLVPALKKLNMNKNSSKQTVKHEVDMALALSAQEFAWSRFLLQKLSSSSNPTTTTSSSSDGIRILERPDKEGGNEEGGIEERLRELKKLLPGGEEMNVEEMLSEIGNYIKCLELQTIALKSIVQDST.

A compositionally biased stretch (low complexity) spans 77–90 (SSSSNPTTTTSSSS). Residues 77 to 110 (SSSSNPTTTTSSSSDGIRILERPDKEGGNEEGGI) are disordered. A compositionally biased stretch (basic and acidic residues) spans 94 to 110 (RILERPDKEGGNEEGGI). The region spanning 94–143 (RILERPDKEGGNEEGGIEERLRELKKLLPGGEEMNVEEMLSEIGNYIKCL) is the bHLH; atypical domain.

The protein belongs to the bHLH protein family.

It is found in the nucleus. This Arabidopsis thaliana (Mouse-ear cress) protein is Transcription factor bHLH146 (BHLH146).